Here is a 115-residue protein sequence, read N- to C-terminus: Toxin-like structure LSTX-R1 (115 aa).

The signal sequence occupies residues 1–18 (MKLSLIIIATSLVIAVVA). Positions 19–51 (FPSKDSAATDFDKTESLENVEERVETALDERPR) are excised as a propeptide.

The protein belongs to the neurotoxin 25 family. F7 subfamily. In terms of processing, contains 4 disulfide bonds. In terms of tissue distribution, expressed by the venom gland.

It localises to the secreted. The chain is Toxin-like structure LSTX-R1 from Lycosa singoriensis (Wolf spider).